The chain runs to 127 residues: Large ribosomal subunit protein bL12 (127 aa).

Belongs to the bacterial ribosomal protein bL12 family. As to quaternary structure, homodimer. Part of the ribosomal stalk of the 50S ribosomal subunit. Forms a multimeric L10(L12)X complex, where L10 forms an elongated spine to which 2 to 4 L12 dimers bind in a sequential fashion. Binds GTP-bound translation factors.

Its function is as follows. Forms part of the ribosomal stalk which helps the ribosome interact with GTP-bound translation factors. Is thus essential for accurate translation. In Streptococcus thermophilus (strain CNRZ 1066), this protein is Large ribosomal subunit protein bL12.